We begin with the raw amino-acid sequence, 422 residues long: Kynurenine--oxoglutarate transaminase 1 (422 aa).

Residues G36 and N185 each coordinate substrate. K247 carries the N6-(pyridoxal phosphate)lysine modification. R398 serves as a coordination point for substrate.

The protein belongs to the class-I pyridoxal-phosphate-dependent aminotransferase family. Homodimer. Pyridoxal 5'-phosphate serves as cofactor.

The protein localises to the cytoplasm. It is found in the cytosol. It carries out the reaction L-kynurenine + 2-oxoglutarate = kynurenate + L-glutamate + H2O. It catalyses the reaction 3-phenylpyruvate + L-glutamine = 2-oxoglutaramate + L-phenylalanine. The enzyme catalyses an S-substituted L-cysteine + H2O = a thiol + pyruvate + NH4(+). The protein operates within amino-acid degradation; L-kynurenine degradation; kynurenate from L-kynurenine: step 1/2. With respect to regulation, inhibited by tryptophan, indole-3-pyruvic acid, 3-indolepropionic acid, DL-indole-3-lactic acid, indole-3-acetic acid (IAC), amino-oxyacetate (AOAA), aminooxy-phenylpropionic acid (AOPP) and Tris. In terms of biological role, catalyzes the irreversible transamination of the L-tryptophan metabolite L-kynurenine to form kynurenic acid (KA), an intermediate in the tryptophan catabolic pathway which is also a broad spectrum antagonist of the three ionotropic excitatory amino acid receptors among others. Also metabolizes the cysteine conjugates of certain halogenated alkenes and alkanes to form reactive metabolites. Catalyzes the beta-elimination of S-conjugates and Se-conjugates of L-(seleno)cysteine, resulting in the cleavage of the C-S or C-Se bond. The sequence is that of Kynurenine--oxoglutarate transaminase 1 from Homo sapiens (Human).